The chain runs to 162 residues: Sec-independent protein translocase protein TatB (162 aa).

Residues 1–21 (MFDIGFSELILIFVVGLVVLG) traverse the membrane as a helical segment. Residues 136–162 (LTAYYPPDDDLVSPSTTKLEQDKQNVN) are disordered.

This sequence belongs to the TatB family. As to quaternary structure, the Tat system comprises two distinct complexes: a TatABC complex, containing multiple copies of TatA, TatB and TatC subunits, and a separate TatA complex, containing only TatA subunits. Substrates initially bind to the TatABC complex, which probably triggers association of the separate TatA complex to form the active translocon.

It is found in the cell inner membrane. Its function is as follows. Part of the twin-arginine translocation (Tat) system that transports large folded proteins containing a characteristic twin-arginine motif in their signal peptide across membranes. Together with TatC, TatB is part of a receptor directly interacting with Tat signal peptides. TatB may form an oligomeric binding site that transiently accommodates folded Tat precursor proteins before their translocation. The protein is Sec-independent protein translocase protein TatB of Haemophilus ducreyi (strain 35000HP / ATCC 700724).